The following is a 506-amino-acid chain: Maturase K (506 aa).

This sequence belongs to the intron maturase 2 family. MatK subfamily.

It localises to the plastid. It is found in the chloroplast. Its function is as follows. Usually encoded in the trnK tRNA gene intron. Probably assists in splicing its own and other chloroplast group II introns. In Rhododendron hippophaeoides (Rhododendron), this protein is Maturase K.